The primary structure comprises 183 residues: Oleosin Bn-V (183 aa).

The interval 1–47 (PARTHHDITTRDQYPLISRDRDQYGMIGRDQYNMSGQNYSKSRQIAK) is polar. Repeats lie at residues 11-20 (RDQYPLISRD) and 21-30 (RDQYGMIGRD). The segment at 48–119 (ATTAVTAGDS…AAITVFSWIY (72 aa)) is hydrophobic. A run of 2 helical transmembrane segments spans residues 57 to 77 (SLLVLSSLTLVGTVIALIVAT) and 99 to 119 (TGFLSSGAFGIAAITVFSWIY). Residues 154-183 (YGQQHTGEEHDRDRDHRTDRDRTRGTQHTT) are disordered. The segment covering 159 to 177 (TGEEHDRDRDHRTDRDRTR) has biased composition (basic and acidic residues).

It belongs to the oleosin family.

The protein localises to the lipid droplet. It is found in the membrane. Its function is as follows. May have a structural role to stabilize the lipid body during desiccation of the seed by preventing coalescence of the oil. Probably interacts with both lipid and phospholipid moieties of lipid bodies. May also provide recognition signals for specific lipase anchorage in lipolysis during seedling growth. The protein is Oleosin Bn-V of Brassica napus (Rape).